A 44-amino-acid chain; its full sequence is Large ribosomal subunit protein bL34 (44 aa).

Basic residues-rich tracts occupy residues 1 to 14 (MKRTLGGTTRKRQK) and 31 to 44 (LSARRRRGRHRLAV). The segment at 1–44 (MKRTLGGTTRKRQKTSGFRARMRTASGRRVLSARRRRGRHRLAV) is disordered.

Belongs to the bacterial ribosomal protein bL34 family.

The sequence is that of Large ribosomal subunit protein bL34 from Gloeobacter violaceus (strain ATCC 29082 / PCC 7421).